Consider the following 72-residue polypeptide: Heat shock factor-binding protein 1-like protein 1 (72 aa).

Residues 12 to 66 (DLLQNAAENLLQEVEEHFQALTATLNLRMEEMGNRIEDLQRNVDDLMAQAGIENS) adopt a coiled-coil conformation.

This sequence belongs to the HSBP1 family.

The chain is Heat shock factor-binding protein 1-like protein 1 (Hsbp1l1) from Rattus norvegicus (Rat).